We begin with the raw amino-acid sequence, 266 residues long: Large ribosomal subunit protein uL2c (266 aa).

A disordered region spans residues 1 to 24 (MAIHLYKTSTPSTRNGTVDSQVKS). Over residues 7 to 24 (KTSTPSTRNGTVDSQVKS) the composition is skewed to polar residues.

Belongs to the universal ribosomal protein uL2 family. As to quaternary structure, part of the 50S ribosomal subunit.

The protein resides in the plastid. The protein localises to the chloroplast. The polypeptide is Large ribosomal subunit protein uL2c (rpl2) (Nicotiana debneyi (Debney's tobacco)).